The following is a 480-amino-acid chain: Cysteine--tRNA ligase (480 aa).

Cys29 serves as a coordination point for Zn(2+). A 'HIGH' region motif is present at residues 31–41 (PTVYADPHLGH). Residues Cys220, His245, and Glu249 each contribute to the Zn(2+) site. The short motif at 276-280 (KMAKS) is the 'KMSKS' region element. Residue Lys279 participates in ATP binding.

It belongs to the class-I aminoacyl-tRNA synthetase family. As to quaternary structure, monomer. It depends on Zn(2+) as a cofactor.

The protein resides in the cytoplasm. The catalysed reaction is tRNA(Cys) + L-cysteine + ATP = L-cysteinyl-tRNA(Cys) + AMP + diphosphate. This chain is Cysteine--tRNA ligase, found in Thermus thermophilus (strain ATCC 27634 / DSM 579 / HB8).